A 446-amino-acid polypeptide reads, in one-letter code: MSSPTSSLDTPVPGNGSPQPSTSATSPTIKEEGQETDPPPGSEGSSSAYIVVILEPEDEPERKRKKGPAPKMLGHELCRVCGDKASGFHYNVLSCEGCKGFFRRSVVHGGAGRYACRGSGTCQMDAFMRRKCQLCRLRKCKEAGMREQCVLSEEQIRKKRIQKQQQQQPPPPSEPAASSSGRPAASPGTSEASSQGSGEGEGIQLTAAQELMIQQLVAAQLQCNKRSFSDQPKVTPWPLGADPQSRDARQQRFAHFTELAIISVQEIVDFAKQVPGFLQLGREDQIALLKASTIEIMLLETARRYNHETECITFLKDFTYSKDDFHRAGLQVEFINPIFEFSRAMRRLGLDDAEYALLIAINIFSADRPNVQEPSRVEALQQPYVEALLSYTRIKRPQDQLRFPRMLMKLVSLRTLSSVHSEQVFALRLQDKKLPPLLSEIWDVHE.

The disordered stretch occupies residues 1–69 (MSSPTSSLDT…PERKRKKGPA (69 aa)). The tract at residues 1 to 76 (MSSPTSSLDT…GPAPKMLGHE (76 aa)) is transactivation AF-1; required for ligand-independent transactivation function. The segment covering 17–28 (SPQPSTSATSPT) has biased composition (low complexity). The nuclear receptor DNA-binding region spans 75 to 152 (HELCRVCGDK…AGMREQCVLS (78 aa)). 2 NR C4-type zinc fingers span residues 78 to 98 (CRVC…CEGC) and 116 to 140 (CRGS…LRKC). Residues 159 to 201 (KRIQKQQQQQPPPPSEPAASSSGRPAASPGTSEASSQGSGEGE) form a disordered region. Positions 175 to 196 (PAASSSGRPAASPGTSEASSQG) are enriched in low complexity. The tract at residues 205–446 (LTAAQELMIQ…LLSEIWDVHE (242 aa)) is transactivation AF-2; required for ligand-dependent transactivation function; mediates interaction with CCAR2. In terms of domain architecture, NR LBD spans 208-446 (AQELMIQQLV…LLSEIWDVHE (239 aa)). Residues Lys395 and Lys433 each participate in a glycyl lysine isopeptide (Lys-Gly) (interchain with G-Cter in SUMO2) cross-link.

This sequence belongs to the nuclear hormone receptor family. NR1 subfamily. As to quaternary structure, forms a heterodimer with RXR. Interacts with CCAR2 (via N-terminus) in a ligand-independent manner. Interacts (when sumoylated) with GPS2; interaction with GPS2 onto hepatic acute phase protein promoters prevents N-Cor corepressor complex dissociation. Interacts with ABCA12 and ABCA1; this interaction is required for ABCA1 localization to the cell surface and is necessary for its normal activity and stability. In terms of processing, sumoylated by SUMO2 at Lys-395 and Lys-433 during the hepatic acute phase response, leading to promote interaction with GPS2 and prevent N-Cor corepressor complex dissociation. In terms of tissue distribution, ubiquitous.

It localises to the nucleus. Nuclear receptor that exhibits a ligand-dependent transcriptional activation activity. Binds preferentially to double-stranded oligonucleotide direct repeats having the consensus half-site sequence 5'-AGGTCA-3' and 4-nt spacing (DR-4). Regulates cholesterol uptake through MYLIP-dependent ubiquitination of LDLR, VLDLR and LRP8; DLDLR and LRP8. Interplays functionally with RORA for the regulation of genes involved in liver metabolism. Induces LPCAT3-dependent phospholipid remodeling in endoplasmic reticulum (ER) membranes of hepatocytes, driving SREBF1 processing and lipogenesis. Via LPCAT3, triggers the incorporation of arachidonate into phosphatidylcholines of ER membranes, increasing membrane dynamics and enabling triacylglycerols transfer to nascent very low-density lipoprotein (VLDL) particles. Via LPCAT3 also counteracts lipid-induced ER stress response and inflammation, likely by modulating SRC kinase membrane compartmentalization and limiting the synthesis of lipid inflammatory mediators. Plays an anti-inflammatory role during the hepatic acute phase response by acting as a corepressor: inhibits the hepatic acute phase response by preventing dissociation of the N-Cor corepressor complex. The polypeptide is Oxysterols receptor LXR-beta (Nr1h2) (Mus musculus (Mouse)).